Reading from the N-terminus, the 230-residue chain is UPF0173 metal-dependent hydrolase LI0883 (230 aa).

Belongs to the UPF0173 family.

In Lawsonia intracellularis (strain PHE/MN1-00), this protein is UPF0173 metal-dependent hydrolase LI0883.